Here is a 222-residue protein sequence, read N- to C-terminus: MSSLSKEAALVHEALVARGLETPLRPPVHEMDNETRKRLISGHMTEIMQLLNLDLSDDSLMETPHRIAKMYVDEIFSGLDYANFPKITVIENKMKVDEMVTVRDITLTSTCEHHFVTIDGKATVAYIPKDSVIGLSKINRIVQFFAQRPQVQERLTQQILTALQTLLGTNNVAVSIDAVHYCVKARGIRDATSATTTTSLGGLFKSSQNTRQEFLRAVRHHN.

Residues cysteine 111, histidine 114, and cysteine 182 each coordinate Zn(2+).

The protein belongs to the GTP cyclohydrolase I family. In terms of assembly, toroid-shaped homodecamer, composed of two pentamers of five dimers.

It catalyses the reaction GTP + H2O = 7,8-dihydroneopterin 3'-triphosphate + formate + H(+). It participates in cofactor biosynthesis; 7,8-dihydroneopterin triphosphate biosynthesis; 7,8-dihydroneopterin triphosphate from GTP: step 1/1. This Citrobacter koseri (strain ATCC BAA-895 / CDC 4225-83 / SGSC4696) protein is GTP cyclohydrolase 1.